A 391-amino-acid chain; its full sequence is Argininosuccinate synthase (391 aa).

An ATP-binding site is contributed by 6-14; that stretch reads AYSGGLDTT. Y84 serves as a coordination point for L-citrulline. Residue G114 coordinates ATP. Positions 116, 120, and 121 each coordinate L-aspartate. N120 provides a ligand contact to L-citrulline. Residues R124, S171, S180, E253, and Y265 each coordinate L-citrulline.

The protein belongs to the argininosuccinate synthase family. Type 1 subfamily. In terms of assembly, homotetramer.

The protein localises to the cytoplasm. The catalysed reaction is L-citrulline + L-aspartate + ATP = 2-(N(omega)-L-arginino)succinate + AMP + diphosphate + H(+). It functions in the pathway amino-acid biosynthesis; L-arginine biosynthesis; L-arginine from L-ornithine and carbamoyl phosphate: step 2/3. This is Argininosuccinate synthase from Sulfolobus acidocaldarius (strain ATCC 33909 / DSM 639 / JCM 8929 / NBRC 15157 / NCIMB 11770).